Reading from the N-terminus, the 762-residue chain is ABC-type oligopeptide transporter ABCB9 (762 aa).

The next 8 helical transmembrane spans lie at 7 to 27 (VVVT…IYAF), 47 to 67 (VLDL…ATIG), 84 to 104 (LVIT…LLLF), 116 to 136 (FWAL…LWGL), 181 to 201 (VAFL…ETFL), 221 to 241 (FTTA…AAGI), 315 to 335 (VFMF…FPII), and 412 to 432 (SGLT…HLVI). Residues 184–467 (LVAASFFLIV…VGSVYSGLMQ (284 aa)) form the ABC transmembrane type-1 domain. In terms of domain architecture, ABC transporter spans 500-736 (VDFENVTFTY…GGLYAKLVQR (237 aa)). 535 to 542 (GPSGSGKS) contacts ATP.

The protein belongs to the ABC transporter superfamily. ABCB family. MHC peptide exporter (TC 3.A.1.209) subfamily. In terms of assembly, homodimer. Interacts (via TMD0 region) with LAMP1; this interaction strongly stabilizes ABCB9 and protects ABCB9 against lysosomal degradation. Interacts (via TMD0 region) with LAMP2 (isoform LAMP-2B). Interacts (via TMD0) with YIF1B; this interaction allows (but is not essential) the ER-to-Golgi trafficking and strongly depends on a salt bridge within TMD0. In terms of tissue distribution, highly expressed in testis, particularly in the Sertoli cells of the seminiferous tubules, and at moderate levels in brain and spinal cord.

It localises to the lysosome membrane. The enzyme catalyses a [oligopeptide](in) + ATP + H2O = a [oligopeptide](out) + ADP + phosphate + H(+). ATP-dependent low-affinity peptide transporter which translocates a broad spectrum of peptides from the cytosol to the lysosomal lumen for degradation. Displays a broad peptide length specificity from 6-mer up to at least 59-mer peptides with an optimum of 23-mers. Binds and transports smaller and larger peptides with the same affinity. Favors positively charged, aromatic or hydrophobic residues in the N- and C-terminal positions whereas negatively charged residues as well as asparagine and methionine are not favored. This chain is ABC-type oligopeptide transporter ABCB9, found in Mus musculus (Mouse).